The following is a 128-amino-acid chain: Small ribosomal subunit protein uS9 (128 aa).

Part of the 30S ribosomal subunit. Contacts proteins S7 and S10.

In terms of biological role, part of the top of the head of the 30S subunit. The C-terminal region penetrates the head emerging in the P-site where it contacts tRNA. In Thermus thermophilus (strain ATCC 27634 / DSM 579 / HB8), this protein is Small ribosomal subunit protein uS9 (rpsI).